The primary structure comprises 134 residues: Large ribosomal subunit protein eL14z (134 aa).

The protein belongs to the eukaryotic ribosomal protein eL14 family.

In Arabidopsis thaliana (Mouse-ear cress), this protein is Large ribosomal subunit protein eL14z (RPL14A).